The chain runs to 254 residues: Phosphoglycerate mutase 1 (254 aa).

Substrate is bound by residues 10 to 17 and 23 to 24; these read RHGESAWN and SG. The active-site Tele-phosphohistidine intermediate is the His11. Phosphoserine occurs at positions 14 and 23. Position 26 is a phosphotyrosine (Tyr26). Ser31 is subject to Phosphoserine. Residues Arg62, 89–92, and Lys100 contribute to the substrate site; that span reads ERHY. The Proton donor/acceptor role is filled by Glu89. Lys106 is modified (N6-acetyllysine). A substrate-binding site is contributed by 116–117; sequence RR. Ser118 carries the post-translational modification Phosphoserine. Residue 187–188 coordinates substrate; the sequence is GN. Lys251 is subject to N6-acetyllysine; alternate. Position 251 is an N6-succinyllysine; alternate (Lys251). N6-acetyllysine is present on residues Lys253 and Lys254.

Belongs to the phosphoglycerate mutase family. BPG-dependent PGAM subfamily. In terms of assembly, homodimer. Post-translationally, acetylated at Lys-253, Lys-253 and Lys-254 under high glucose condition. Acetylation increases catalytic activity. Under glucose restriction SIRT1 levels dramatically increase and it deacetylates the enzyme.

The enzyme catalyses (2R)-2-phosphoglycerate = (2R)-3-phosphoglycerate. It carries out the reaction (2R)-3-phospho-glyceroyl phosphate = (2R)-2,3-bisphosphoglycerate + H(+). In terms of biological role, catalyzes the interconversion of 2-phosphoglycerate and 3-phosphoglyceratea crucial step in glycolysis, by using 2,3-bisphosphoglycerate. Also catalyzes the interconversion of (2R)-2,3-bisphosphoglycerate and (2R)-3-phospho-glyceroyl phosphate. This is Phosphoglycerate mutase 1 from Pongo abelii (Sumatran orangutan).